The sequence spans 171 residues: Terminase, small subunit (171 aa).

This sequence belongs to the P23virus small terminase family. In terms of assembly, homononamer; forms a ring-like structure through which genomic DNA is translocated into the capsid. Heterodimer with the terminase large subunit; the active complex is probably heterooligomeric.

Functionally, the terminase small subunit binds to the packaging initiation site and regulates the ATPase activity of the terminase large subunit. The terminase lies at a unique vertex of the procapsid and is composed of two subunits, a small terminase subunit involved in viral DNA recognition (packaging sequence), and a large terminase subunit. Both terminase subunits heterooligomerize and are docked on the portal protein to form the packaging machine. In Thermus virus P23-45 (Thermus thermophilus phage P23-45), this protein is Terminase, small subunit.